The primary structure comprises 508 residues: Aromatase (508 aa).

Cys437 is a heme binding site.

It belongs to the cytochrome P450 family. Heme is required as a cofactor.

Its subcellular location is the membrane. The enzyme catalyses testosterone + 3 reduced [NADPH--hemoprotein reductase] + 3 O2 = 17beta-estradiol + formate + 3 oxidized [NADPH--hemoprotein reductase] + 4 H2O + 4 H(+). It carries out the reaction androst-4-ene-3,17-dione + 3 reduced [NADPH--hemoprotein reductase] + 3 O2 = estrone + formate + 3 oxidized [NADPH--hemoprotein reductase] + 4 H2O + 4 H(+). Catalyzes the formation of aromatic C18 estrogens from C19 androgens. This is Aromatase (Cyp19a1) from Rattus norvegicus (Rat).